The chain runs to 306 residues: Dermonecrotic toxin LiSicTox-alphaIA1a (306 aa).

An N-terminal signal peptide occupies residues 1–18 (MLPYIVLVLGCWSVLSQA). A propeptide spanning residues 19–26 (AQTDDEER) is cleaved from the precursor. Residue histidine 38 is part of the active site. Residues glutamate 58 and aspartate 60 each contribute to the Mg(2+) site. Catalysis depends on histidine 74, which acts as the Nucleophile. Cystine bridges form between cysteine 78/cysteine 84 and cysteine 80/cysteine 223. Aspartate 118 provides a ligand contact to Mg(2+).

It belongs to the arthropod phospholipase D family. Class II subfamily. Class IIa sub-subfamily. The cofactor is Mg(2+). As to expression, expressed by the venom gland.

It is found in the secreted. It carries out the reaction an N-(acyl)-sphingosylphosphocholine = an N-(acyl)-sphingosyl-1,3-cyclic phosphate + choline. The catalysed reaction is an N-(acyl)-sphingosylphosphoethanolamine = an N-(acyl)-sphingosyl-1,3-cyclic phosphate + ethanolamine. It catalyses the reaction a 1-acyl-sn-glycero-3-phosphocholine = a 1-acyl-sn-glycero-2,3-cyclic phosphate + choline. The enzyme catalyses a 1-acyl-sn-glycero-3-phosphoethanolamine = a 1-acyl-sn-glycero-2,3-cyclic phosphate + ethanolamine. It carries out the reaction 1-hexadecanoyl-sn-glycero-3-phosphocholine = 1-hexadecanoyl-sn-glycero-2,3-cyclic phosphate + choline. Catalytic activity and hemolysis are inhibited by divalent ion chelators (1,10-phenanthroline, EDTA, and EGTA). Dermonecrotic toxins cleave the phosphodiester linkage between the phosphate and headgroup of certain phospholipids (sphingolipid and lysolipid substrates), forming an alcohol (often choline) and a cyclic phosphate. This toxin acts on sphingomyelin (SM) with high activity. It discriminate between the number of carbon atoms in the substrates, since it prefers SM with six carbons in the fatty acid chain (SM6:0) to other SMs (SM12:0 &gt; SM16:0 &gt; SM18:0 &gt; SM2:0 &gt; SM24:0). It also acts on lysophosphatidylcholine (LPC) (LPC16:0 = LPC12:0 &gt; LPC18:0), and lyso-platelet activating factor (LPAF, an alkyl-LPC) but not on phosphatidylcholine (PC). It may also act on ceramide phosphoethanolamine (CPE), lysophosphatidylcholine (LPC) and lysophosphatidylethanolamine (LPE), but not on lysophosphatidylserine (LPS), and lysophosphatidylglycerol (LPG). It acts by transphosphatidylation, releasing exclusively cyclic phosphate products as second products. In vivo, it induces dermonecrosis, vascular permeability, platelet aggregation, inflammatory response, edema and cytotoxicity against renal epithelial cells. It causes direct nephrotoxicity and is directly toxic to liver. It also induces hemolysis in a complement-dependent manner as well as in a complement-independent manner. The hemolysis provoked in a complement-independent manner is composed of several steps. The toxin binds to erythrocyte membranes, hydrolyzes membrane phospholipids (SM and LPC) thus generating metabolism products that cause hemolysis, probably by provoking an increase of calcium inside cells. The calcium influx is due to the opening of L-type calcium channels, since L-type calcium channel blockers inhibit calcium influx. Is lethal to mice when intraperitoneally injected. This Loxosceles intermedia (Brown spider) protein is Dermonecrotic toxin LiSicTox-alphaIA1a.